The primary structure comprises 658 residues: Threonine--tRNA ligase (658 aa).

The TGS domain maps to 1–61 (MSDVRVIIQR…RDGESVEPVE (61 aa)). The catalytic stretch occupies residues 259–554 (DHRKLGNELD…LLEHYAGAFP (296 aa)). Zn(2+)-binding residues include Cys353, His404, and His531.

This sequence belongs to the class-II aminoacyl-tRNA synthetase family. As to quaternary structure, homodimer. The cofactor is Zn(2+).

Its subcellular location is the cytoplasm. The catalysed reaction is tRNA(Thr) + L-threonine + ATP = L-threonyl-tRNA(Thr) + AMP + diphosphate + H(+). Its function is as follows. Catalyzes the attachment of threonine to tRNA(Thr) in a two-step reaction: L-threonine is first activated by ATP to form Thr-AMP and then transferred to the acceptor end of tRNA(Thr). Also edits incorrectly charged L-seryl-tRNA(Thr). The sequence is that of Threonine--tRNA ligase from Streptomyces griseus subsp. griseus (strain JCM 4626 / CBS 651.72 / NBRC 13350 / KCC S-0626 / ISP 5235).